We begin with the raw amino-acid sequence, 117 residues long: Small ribosomal subunit protein bS6 (117 aa).

The tract at residues 96 to 117 (HDEGPSVQMQKRDEREGRRERR) is disordered.

It belongs to the bacterial ribosomal protein bS6 family.

Functionally, binds together with bS18 to 16S ribosomal RNA. This chain is Small ribosomal subunit protein bS6, found in Jannaschia sp. (strain CCS1).